The sequence spans 126 residues: Glycine cleavage system H protein (126 aa).

The region spanning 24-105 is the Lipoyl-binding domain; that stretch reads TLTVGITDHA…AYGVWLFKIK (82 aa). Position 65 is an N6-lipoyllysine (Lys65).

It belongs to the GcvH family. The glycine cleavage system is composed of four proteins: P, T, L and H. (R)-lipoate serves as cofactor.

Its function is as follows. The glycine cleavage system catalyzes the degradation of glycine. The H protein shuttles the methylamine group of glycine from the P protein to the T protein. This Burkholderia cenocepacia (strain HI2424) protein is Glycine cleavage system H protein.